A 334-amino-acid chain; its full sequence is MNAVIEQRKVLLEIADLKVHFDIKEGKQWFWQPPKTLKAVDGVTLRLYEGETLGVVGESGCGKSTFARAIIGLVKATDGKVAWLGKDLLGMKADEWREVRSDIQMIFQDPLASLNPRMTIGEIIAEPLRTYHPKLSRQDVRDRVKAMMLKVGLLPNLINRYPHEFSGGQCQRIGIARALILEPKLIICDEPVSALDVSIQAQVVNLLQQLQREMGLSLIFIAHDLAVVKHISDRVLVMYLGHAVELGTYDEVYHNPLHPYTKALMSAVPIPDPDLERNKKIQLLEGELPSPINPPSGCVFRTRCPIAGPECAQTRPVLEGSFRHAVSCLKVDPL.

The 254-residue stretch at 12 to 265 (LEIADLKVHF…PLHPYTKALM (254 aa)) folds into the ABC transporter domain. 57–64 (GESGCGKS) contacts ATP.

It belongs to the ABC transporter superfamily. The complex is composed of two ATP-binding proteins (OppD and OppF), two transmembrane proteins (OppB and OppC) and a solute-binding protein (OppA).

It is found in the cell inner membrane. The catalysed reaction is a [peptide](out) + ATP + H2O = a [peptide](in) + ADP + phosphate + H(+). The enzyme catalyses L-alanyl-gamma-D-glutamyl-meso-2,6-diaminopimelate(out) + ATP + H2O = L-alanyl-gamma-D-glutamyl-meso-2,6-diaminopimelate(in) + ADP + phosphate + H(+). Part of the ABC transporter complex OppABCDF involved in the uptake of oligopeptides, including the cell wall murein tripeptide L-alanyl-gamma-D-glutamyl-meso-diaminopimelate. Probably responsible for energy coupling to the transport system. Plays an important nutritional role and is involved in the recycling of cell wall peptides. The sequence is that of Oligopeptide transport ATP-binding protein OppF from Salmonella typhimurium (strain LT2 / SGSC1412 / ATCC 700720).